Reading from the N-terminus, the 414-residue chain is Nuclear localization sequence-binding protein (414 aa).

Disordered regions lie at residues 1–172 (MAKT…TIFV), 244–264 (STSK…TPSE), and 336–414 (RPVR…KTFD). Positions 10 to 26 (NKKEVKASKQAKEEKAK) are enriched in basic and acidic residues. 2 stretches are compositionally biased toward low complexity: residues 27–44 (AVSS…SSSE) and 54–73 (ESSS…SSSD). Residues 78–87 (AETKKEESKD) show a composition bias toward basic and acidic residues. A phosphoserine mark is found at S93, S95, S96, S97, S116, S127, S129, S131, and S143. Positions 96–105 (SSDEEEEEEK) are enriched in acidic residues. Positions 106–117 (EETKKEESKESS) are enriched in basic and acidic residues. Positions 118–128 (SSDSSSSSSSD) are enriched in low complexity. Residues 134–144 (EESNDKKRKSE) are compositionally biased toward basic and acidic residues. RRM domains lie at 168-246 (ATIF…MSTS) and 267-345 (DTLF…FSSP). Gly residues predominate over residues 351-386 (GGRGGSRGFGGRGGGRGGNRGFGGRGGARGGRGGFR). R353 bears the Omega-N-methylarginine mark. The RGG-box stretch occupies residues 353–384 (RGGSRGFGGRGGGRGGNRGFGGRGGARGGRGG). 3 positions are modified to asymmetric dimethylarginine; by HMT1; alternate: R357, R362, and R366. An omega-N-methylarginine; by HMT1; alternate mark is found at R357, R362, and R366. Positions 366–384 (RGGNRGFGGRGGARGGRGG) are RNA-binding RGG-box. At R370 the chain carries Omega-N-methylarginine. R375, R379, and R382 each carry asymmetric dimethylarginine; by HMT1; alternate. R375, R379, and R382 each carry omega-N-methylarginine; by HMT1; alternate. An Omega-N-methylarginine modification is found at R386.

It belongs to the RRM GAR family. In terms of processing, methylated by HMT1, forming asymmetric dimethylarginines (DMA) within a domain referred to as an RGG box, made up of repeated Gly-Gly dipeptides interspersed with Arg and aromatic residues. Post-translationally, pyrophosphorylated by 5-diphosphoinositol pentakisphosphate (5-IP7). Serine pyrophosphorylation is achieved by Mg(2+)-dependent, but enzyme independent transfer of a beta-phosphate from a inositol pyrophosphate to a pre-phosphorylated serine residue.

The protein resides in the nucleus. The protein localises to the nucleolus. In terms of biological role, involved in pre-rRNA processing. Specifically binds nuclear localization sequences. Candidate for a receptor at the nucleus that may be involved in both RNA and protein transport. Binds telomeric sequences of the type (TG[1-3])n in vitro. This is Nuclear localization sequence-binding protein from Saccharomyces cerevisiae (strain ATCC 204508 / S288c) (Baker's yeast).